The following is a 351-amino-acid chain: Histidinol-phosphate aminotransferase (351 aa).

Lysine 221 bears the N6-(pyridoxal phosphate)lysine mark.

This sequence belongs to the class-II pyridoxal-phosphate-dependent aminotransferase family. Histidinol-phosphate aminotransferase subfamily. Homodimer. Pyridoxal 5'-phosphate serves as cofactor.

It carries out the reaction L-histidinol phosphate + 2-oxoglutarate = 3-(imidazol-4-yl)-2-oxopropyl phosphate + L-glutamate. The protein operates within amino-acid biosynthesis; L-histidine biosynthesis; L-histidine from 5-phospho-alpha-D-ribose 1-diphosphate: step 7/9. The sequence is that of Histidinol-phosphate aminotransferase from Staphylococcus epidermidis (strain ATCC 12228 / FDA PCI 1200).